Here is a 139-residue protein sequence, read N- to C-terminus: ATP synthase epsilon chain (139 aa).

It belongs to the ATPase epsilon chain family. In terms of assembly, F-type ATPases have 2 components, CF(1) - the catalytic core - and CF(0) - the membrane proton channel. CF(1) has five subunits: alpha(3), beta(3), gamma(1), delta(1), epsilon(1). CF(0) has three main subunits: a, b and c.

The protein resides in the cell inner membrane. Its function is as follows. Produces ATP from ADP in the presence of a proton gradient across the membrane. This chain is ATP synthase epsilon chain, found in Pseudomonas syringae pv. tomato (strain ATCC BAA-871 / DC3000).